The sequence spans 132 residues: Small ribosomal subunit protein bS6 (132 aa).

This sequence belongs to the bacterial ribosomal protein bS6 family.

Its function is as follows. Binds together with bS18 to 16S ribosomal RNA. This Chlorobium chlorochromatii (strain CaD3) protein is Small ribosomal subunit protein bS6.